The following is an 884-amino-acid chain: E3 ubiquitin-protein ligase BRE1-like 1 (884 aa).

Residues 1 to 37 (MGSTGEPDRKRRLSSSVAPGGGAPVSPAKRLAVAPTS) form a disordered region. A coiled-coil region spans residues 49-86 (YKNQKLSEQLEAHKFEYRALENKFAGLKEKQRTHNETL). The tract at residues 107–127 (KSGSPNSSPGSGHNNVQKDGT) is disordered. Positions 108–121 (SGSPNSSPGSGHNN) are enriched in low complexity. Coiled-coil stretches lie at residues 216-541 (LNNV…ELKL), 580-663 (SKLE…LQQI), 696-762 (RNLQ…QSLD), and 789-827 (KKRIEDDLEVMSRKASSLRAKARESAVLEKLRHEVKEYR). The segment at 832 to 871 (CGICHDRQKEVVITKCYHLFCNQCIQKSLGNRQRRCPSCS) adopts an RING-type zinc-finger fold.

Belongs to the BRE1 family. Interacts with SKIPA. Interacts with HUB2.

Its subcellular location is the nucleus. The catalysed reaction is S-ubiquitinyl-[E2 ubiquitin-conjugating enzyme]-L-cysteine + [acceptor protein]-L-lysine = [E2 ubiquitin-conjugating enzyme]-L-cysteine + N(6)-ubiquitinyl-[acceptor protein]-L-lysine.. It participates in protein modification; protein ubiquitination. In terms of biological role, E3 ubiquitin-protein ligase that monoubiquitinates H2B to form H2BK143ub1. H2BK143ub1 gives a specific tag for epigenetic transcriptional activation and is a prerequisite for H3 Lys-4 methylation (H3K4me). It thereby plays a central role in histone code and gene regulation. H2B monoubiquitination (H2BK143ub1), mediated by HUB1, modulates transcriptional regulation of anther development, likely by promoting histone H3K4 dimethylation (H3K4me2) in the chromatin of the key tapetum degradation-related genes C4, CP1 and UDT1. In Oryza sativa subsp. japonica (Rice), this protein is E3 ubiquitin-protein ligase BRE1-like 1.